Consider the following 123-residue polypeptide: Heat-labile enterotoxin IIA, B chain (123 aa).

Positions 1–19 (MSSKKIIGAFVLMTGILSG) are cleaved as a signal peptide. Cys33 and Cys104 are disulfide-bonded.

As to quaternary structure, heterohexamer of one A chain and of five B chains.

The biological activity of the toxin is produced by the A chain, which activates intracellular adenyl cyclase. The sequence is that of Heat-labile enterotoxin IIA, B chain from Escherichia coli.